Reading from the N-terminus, the 436-residue chain is Tol-Pal system protein TolB (436 aa).

A signal peptide spans 1–28 (MEMLRRNFFRLLMVLVAGCGLIASPAKA).

The protein belongs to the TolB family. The Tol-Pal system is composed of five core proteins: the inner membrane proteins TolA, TolQ and TolR, the periplasmic protein TolB and the outer membrane protein Pal. They form a network linking the inner and outer membranes and the peptidoglycan layer.

The protein resides in the periplasm. Functionally, part of the Tol-Pal system, which plays a role in outer membrane invagination during cell division and is important for maintaining outer membrane integrity. The chain is Tol-Pal system protein TolB from Sinorhizobium medicae (strain WSM419) (Ensifer medicae).